An 810-amino-acid chain; its full sequence is MAQHLLHGTLHATIYEVDALHGGGVRQGFLGKILANVEETIGVGKGETQLYATIDLQKARVGRTRKIKNEPKNPKWYESFHIYCAHLASDIIFTVKDDNPIGATLIGRAYIPVDQVINGEEVDQWVEILDNDRNPIQGGSKIHVKLQYFHVEEDRNWNMGIKSAKFPGVPYTFFSQRQGCKVSLYQDAHIPDNFVPRIPLAGGKNYEPQRCWEDIFDAISNAKHLIYITGWSVYAEIALVRDSRRPKPGGDVTIGELLKKKASEGVRVLLLVWDDRTSVDVLKKDGLMATHDEETENFFRGSDVHCILCPRNPDDGGSIVQSLQISTMFTHHQKIVVVDSEMPSRGGSEMRRIVSFVGGIDLCDGRYDTPFHSLFRTLDTVHHDDFHQPNFTGAAITKGGPREPWHDIHSRLEGPIAWDVMYNFEQRWSKQGGKDILVKLRDLSDIIITPSPVMFQEDHDVWNVQLFRSIDGGAAAGFPESPEAAAEAGLVSGKDNIIDRSIQDAYIHAIRRAKDFIYVENQYFLGSSFAWAADGITPEDINALHLIPKELSLKIVSKIEKGEKFRVYVVVPMWPEGLPESGSVQAILDWQRRTMEMMYKDVIQALRAQGLEEDPRNYLTFFCLGNREVKKDGEYEPAEKPDPDTDYMRAQEARRFMIYVHTKMMIVDDEYIIIGSANINQRSMDGARDSEIAMGGYQPHHLSHRQPARGQIHGFRMSLWYEHLGMLDETFLDPSSLECIEKVNRISDKYWDFYSSESLEHDLPGHLLRYPIGVASEGDITELPGFEFFPDTKARILGTKSDYLPPILTT.

The 126-residue stretch at 1–126 (MAQHLLHGTL…INGEEVDQWV (126 aa)) folds into the C2 domain. Aspartate 187 provides a ligand contact to Ca(2+). One can recognise a PLD phosphodiesterase 1 domain in the interval 327–366 (TMFTHHQKIVVVDSEMPSRGGSEMRRIVSFVGGIDLCDGR). Residues histidine 332, lysine 334, and aspartate 339 contribute to the active site. Histidine 332 contributes to the a 1,2-diacyl-sn-glycero-3-phosphate binding site. Ca(2+)-binding residues include histidine 372 and histidine 406. Residues glutamine 522 and histidine 661 each coordinate a 1,2-diacyl-sn-glycero-3-phosphate. Residues 656–683 (FMIYVHTKMMIVDDEYIIIGSANINQRS) form the PLD phosphodiesterase 2 domain. Residues histidine 661, lysine 663, and aspartate 668 contribute to the active site. Residue glutamate 722 participates in Ca(2+) binding.

The protein belongs to the phospholipase D family. C2-PLD subfamily. In terms of assembly, interacts with GPA1. This binding inhibits PLDALPHA1 activity and is relieved by GTP. The cofactor is Ca(2+). As to expression, highly expressed in roots, stems and flowers, moderately in leaves, seedlings and siliques. Not detected in seeds.

It is found in the cytoplasm. It localises to the cell membrane. Its subcellular location is the mitochondrion membrane. The protein localises to the microsome membrane. The protein resides in the vacuole. It is found in the cytoplasmic vesicle. It localises to the clathrin-coated vesicle. It catalyses the reaction a 1,2-diacyl-sn-glycero-3-phosphocholine + H2O = a 1,2-diacyl-sn-glycero-3-phosphate + choline + H(+). Its activity is regulated as follows. Not inhibited by neomycin. In terms of biological role, hydrolyzes glycerol-phospholipids at the terminal phosphodiesteric bond to generate phosphatidic acids (PA). Plays an important role in various cellular processes, including phytohormone action and response to stress, characterized by acidification of the cell. Involved in wound induction of jasmonic acid. May be involved in membrane lipid remodeling. Probably involved in freezing tolerance by modulating the cold-responsive genes and accumulation of osmolytes. Can use phosphatidylcholine (PC), phosphatidylethanolamine (PE) and phosphatidylglycerol (PG) as substrates, both in presence or in absence of PIP2. Its main substrate is phosphatidylcholine. Stimulates the intrinsic GTPase activity of GPA1 upon binding. Mediates the abscisic acid effects on stomata through interaction with GPA1 and the production of phosphatidic acid that bind to ABI1. Involved in seed aging and deterioration. Involved in microtubule stabilization and salt tolerance. Involved in abscisic acid-induced stomatal closure. The polypeptide is Phospholipase D alpha 1 (Arabidopsis thaliana (Mouse-ear cress)).